Consider the following 114-residue polypeptide: PDZK1-interacting protein 1 (114 aa).

Residues 1–28 lie on the Extracellular side of the membrane; it reads MSAFGLLILGLLTAVPPASCRQGLGNLQ. Residues 29–51 traverse the membrane as a helical segment; that stretch reads PWMQGLIAVAVFLVLVAIAFAVN. Over 52 to 114 the chain is Cytoplasmic; it reads HFWCQEEPEP…EEGKVRSTPM (63 aa). A Phosphoserine modification is found at Ser-85. A disordered region spans residues 95–114; it reads HENAYENVPEEEGKVRSTPM. The segment covering 105–114 has biased composition (basic and acidic residues); it reads EEGKVRSTPM.

The protein belongs to the PDZK1-interacting protein 1/SMIM24 family. As to quaternary structure, forms a heterodimer (via N-terminal transmembrane helix) with SLC5A2/SGLT2 (via TM13); this interaction enhances SLC5A2 transporter activity. Interacts with PDZK1.

The protein resides in the apical cell membrane. Auxiliary protein of electrogenic Na(+)-coupled sugar symporter SLC5A2/SGLT2 and SLC5A1/SGLT1. Essential for the transporter activity of SLC5A2/SGLT2 but not SLC5A1/SGLT1. This chain is PDZK1-interacting protein 1, found in Pongo abelii (Sumatran orangutan).